The sequence spans 284 residues: Bifunctional protein FolD (284 aa).

Residues 165-167, S190, and V231 contribute to the NADP(+) site; that span reads GRS.

Belongs to the tetrahydrofolate dehydrogenase/cyclohydrolase family. As to quaternary structure, homodimer.

The catalysed reaction is (6R)-5,10-methylene-5,6,7,8-tetrahydrofolate + NADP(+) = (6R)-5,10-methenyltetrahydrofolate + NADPH. It carries out the reaction (6R)-5,10-methenyltetrahydrofolate + H2O = (6R)-10-formyltetrahydrofolate + H(+). It participates in one-carbon metabolism; tetrahydrofolate interconversion. Functionally, catalyzes the oxidation of 5,10-methylenetetrahydrofolate to 5,10-methenyltetrahydrofolate and then the hydrolysis of 5,10-methenyltetrahydrofolate to 10-formyltetrahydrofolate. The sequence is that of Bifunctional protein FolD from Brevibacillus brevis (strain 47 / JCM 6285 / NBRC 100599).